The sequence spans 1489 residues: DEAD-box ATP-dependent DNA helicase Fancm (1489 aa).

The Helicase ATP-binding domain maps to 65 to 237; the sequence is IVQSALFKNT…AVCRNLYISN (173 aa). Residue 78 to 85 participates in ATP binding; the sequence is LPTGLGKT. Positions 185-188 match the DEAH box motif; sequence DEAH. The Helicase C-terminal domain occupies 418–584; that stretch reads KLRQVLVQHF…VVKLSLYEQN (167 aa). 6 disordered regions span residues 591–647, 980–1000, 1145–1182, 1196–1222, 1255–1293, and 1452–1489; these read KFQP…ESQQ, VEESQRSTPISIADSSGESNH, TETIKNSENKNSHEDGSRTVSPDIFGSDSMSPLKPQGK, VLPCPPPNSVGLNSPENRKRTNPSIQE, NPTISVPKDEEDSPIARRPSKRKIVISSDEEEEQKPQIA, and ERRKQRRLGKVPSAPVNKRRRLQTISTSSDEDDVVLID. The segment covering 594-610 has biased composition (basic and acidic residues); the sequence is PKCEEKHMEPVAEEKPK. Residues 611–625 are compositionally biased toward basic residues; that stretch reads PKSAAKTKESRKRKQ. Over residues 985 to 998 the composition is skewed to polar residues; sequence RSTPISIADSSGES. The segment covering 1149 to 1161 has biased composition (basic and acidic residues); that stretch reads KNSENKNSHEDGS. The span at 1480–1489 shows a compositional bias: acidic residues; sequence SDEDDVVLID.

Belongs to the DEAD box helicase family. DEAH subfamily. FANCM sub-subfamily.

It localises to the nucleus. The enzyme catalyses ATP + H2O = ADP + phosphate + H(+). It catalyses the reaction Couples ATP hydrolysis with the unwinding of duplex DNA by translocating in the 3'-5' direction.. Functionally, a ssDNA-dependent ATPase with 3' to 5' helicase activity. Involved in multiple DNA-damage responses, some that require ATPase and helicase activity and some that are independent of these. Involved in DNA interstrand cross-link repair, probably together with Fancl and other Fanconi anemia pathway homologs. Independent of Fancl involved in DNA double strand break repair, including contributing to the synthesis-dependent strand annealing (SDSA) pathway. Probably contributes to SDSA by unwinding short duplex regions in complex D-loop-like DNA structures. The sequence is that of DEAD-box ATP-dependent DNA helicase Fancm from Drosophila melanogaster (Fruit fly).